Consider the following 316-residue polypeptide: N-acetylmuramic acid 6-phosphate etherase (316 aa).

One can recognise an SIS domain in the interval 66 to 229; the sequence is IVAAIGRGGR…STASMIRLGK (164 aa). The active-site Proton donor is the Glu94. Glu125 is a catalytic residue.

This sequence belongs to the GCKR-like family. MurNAc-6-P etherase subfamily. In terms of assembly, homodimer.

It carries out the reaction N-acetyl-D-muramate 6-phosphate + H2O = N-acetyl-D-glucosamine 6-phosphate + (R)-lactate. It participates in amino-sugar metabolism; 1,6-anhydro-N-acetylmuramate degradation. Its pathway is amino-sugar metabolism; N-acetylmuramate degradation. It functions in the pathway cell wall biogenesis; peptidoglycan recycling. Specifically catalyzes the cleavage of the D-lactyl ether substituent of MurNAc 6-phosphate, producing GlcNAc 6-phosphate and D-lactate. Together with AnmK, is also required for the utilization of anhydro-N-acetylmuramic acid (anhMurNAc) either imported from the medium or derived from its own cell wall murein, and thus plays a role in cell wall recycling. The polypeptide is N-acetylmuramic acid 6-phosphate etherase (Jannaschia sp. (strain CCS1)).